The primary structure comprises 212 residues: COP9 signalosome complex subunit 8 (212 aa).

Residues 26–193 (TSLSAYEEQA…KPVVTAPPKD (168 aa)) form the PCI domain.

The protein belongs to the CSN8 family. Component of the COP9 signalosome (CSN) complex.

It is found in the cytoplasm. The protein localises to the nucleus. In terms of biological role, component of the COP9 signalosome (CSN) complex that acts as an regulator of the ubiquitin (Ubl) conjugation pathway by mediating the deneddylation of the cullin subunit of SCF-type E3 ubiquitin-protein ligase complexes. The CSN complex seems to link protein degradation to sexual development. The sequence is that of COP9 signalosome complex subunit 8 (csnH) from Emericella nidulans (strain FGSC A4 / ATCC 38163 / CBS 112.46 / NRRL 194 / M139) (Aspergillus nidulans).